The chain runs to 330 residues: Fructose-1,6-bisphosphatase class 1 (330 aa).

Mg(2+)-binding residues include Glu84, Asp103, Leu105, and Asp106. Residues 106 to 109 (DGSS), Asn196, and Lys262 contribute to the substrate site. A Mg(2+)-binding site is contributed by Glu268.

Belongs to the FBPase class 1 family. In terms of assembly, homotetramer. It depends on Mg(2+) as a cofactor.

It localises to the cytoplasm. It catalyses the reaction beta-D-fructose 1,6-bisphosphate + H2O = beta-D-fructose 6-phosphate + phosphate. It participates in carbohydrate biosynthesis; gluconeogenesis. The sequence is that of Fructose-1,6-bisphosphatase class 1 from Shewanella putrefaciens (strain CN-32 / ATCC BAA-453).